The primary structure comprises 239 residues: Uridylate kinase (239 aa).

13–16 (KLSG) is a binding site for ATP. G55 serves as a coordination point for UMP. G56 and R60 together coordinate ATP. UMP is bound by residues D75 and 136–143 (TGNPFFTT). Residues T163, Y169, and D172 each contribute to the ATP site.

Belongs to the UMP kinase family. Homohexamer.

It localises to the cytoplasm. It carries out the reaction UMP + ATP = UDP + ADP. The protein operates within pyrimidine metabolism; CTP biosynthesis via de novo pathway; UDP from UMP (UMPK route): step 1/1. With respect to regulation, inhibited by UTP. Catalyzes the reversible phosphorylation of UMP to UDP. The protein is Uridylate kinase of Chromobacterium violaceum (strain ATCC 12472 / DSM 30191 / JCM 1249 / CCUG 213 / NBRC 12614 / NCIMB 9131 / NCTC 9757 / MK).